The following is a 222-amino-acid chain: Ribosomal RNA small subunit methyltransferase G (222 aa).

S-adenosyl-L-methionine is bound by residues glycine 82, leucine 87, 132–133 (AE), and arginine 150.

It belongs to the methyltransferase superfamily. RNA methyltransferase RsmG family.

The protein resides in the cytoplasm. In terms of biological role, specifically methylates the N7 position of guanine in position 518 of 16S rRNA. The sequence is that of Ribosomal RNA small subunit methyltransferase G from Corynebacterium jeikeium (strain K411).